A 362-amino-acid chain; its full sequence is Biotin synthase (362 aa).

In terms of domain architecture, Radical SAM core spans C70–R305. C88, C92, and C95 together coordinate [4Fe-4S] cluster. [2Fe-2S] cluster-binding residues include C133, C170, C230, and R300.

Belongs to the radical SAM superfamily. Biotin synthase family. As to quaternary structure, homodimer. The cofactor is [4Fe-4S] cluster. [2Fe-2S] cluster is required as a cofactor.

The enzyme catalyses (4R,5S)-dethiobiotin + (sulfur carrier)-SH + 2 reduced [2Fe-2S]-[ferredoxin] + 2 S-adenosyl-L-methionine = (sulfur carrier)-H + biotin + 2 5'-deoxyadenosine + 2 L-methionine + 2 oxidized [2Fe-2S]-[ferredoxin]. It participates in cofactor biosynthesis; biotin biosynthesis; biotin from 7,8-diaminononanoate: step 2/2. Functionally, catalyzes the conversion of dethiobiotin (DTB) to biotin by the insertion of a sulfur atom into dethiobiotin via a radical-based mechanism. The polypeptide is Biotin synthase (Synechocystis sp. (strain ATCC 27184 / PCC 6803 / Kazusa)).